The following is a 252-amino-acid chain: uncharacterized protein (252 aa).

6 consecutive transmembrane segments (helical) span residues 5–25, 29–49, 61–81, 141–161, 179–199, and 217–237; these read LTSL…IVSF, LALV…GTFI, IAGI…GLYF, ILPS…PGII, WLLL…SKWW, and IGWI…LIQF.

The protein belongs to the DedA family.

Its subcellular location is the cell membrane. This is an uncharacterized protein from Buchnera aphidicola subsp. Schizaphis graminum (strain Sg).